The sequence spans 556 residues: 2-succinyl-5-enolpyruvyl-6-hydroxy-3-cyclohexene-1-carboxylate synthase (556 aa).

Belongs to the TPP enzyme family. MenD subfamily. As to quaternary structure, homodimer. Requires Mg(2+) as cofactor. The cofactor is Mn(2+). It depends on thiamine diphosphate as a cofactor.

The enzyme catalyses isochorismate + 2-oxoglutarate + H(+) = 5-enolpyruvoyl-6-hydroxy-2-succinyl-cyclohex-3-ene-1-carboxylate + CO2. The protein operates within quinol/quinone metabolism; 1,4-dihydroxy-2-naphthoate biosynthesis; 1,4-dihydroxy-2-naphthoate from chorismate: step 2/7. Its pathway is quinol/quinone metabolism; menaquinone biosynthesis. Functionally, catalyzes the thiamine diphosphate-dependent decarboxylation of 2-oxoglutarate and the subsequent addition of the resulting succinic semialdehyde-thiamine pyrophosphate anion to isochorismate to yield 2-succinyl-5-enolpyruvyl-6-hydroxy-3-cyclohexene-1-carboxylate (SEPHCHC). The polypeptide is 2-succinyl-5-enolpyruvyl-6-hydroxy-3-cyclohexene-1-carboxylate synthase (Escherichia coli O45:K1 (strain S88 / ExPEC)).